Here is a 317-residue protein sequence, read N- to C-terminus: Probable deoxyhypusine synthase (317 aa).

Lys-285 serves as the catalytic Nucleophile.

This sequence belongs to the deoxyhypusine synthase family. Requires NAD(+) as cofactor.

The catalysed reaction is [eIF5A protein]-L-lysine + spermidine = [eIF5A protein]-deoxyhypusine + propane-1,3-diamine. It functions in the pathway protein modification; eIF5A hypusination. Catalyzes the NAD-dependent oxidative cleavage of spermidine and the subsequent transfer of the butylamine moiety of spermidine to the epsilon-amino group of a specific lysine residue of the eIF-5A precursor protein to form the intermediate deoxyhypusine residue. The protein is Probable deoxyhypusine synthase (dys) of Methanosarcina thermophila.